The chain runs to 469 residues: UDP-N-acetylmuramoylalanine--D-glutamate ligase (469 aa).

110-116 contributes to the ATP binding site; it reads GTNGKST.

It belongs to the MurCDEF family.

It localises to the cytoplasm. It carries out the reaction UDP-N-acetyl-alpha-D-muramoyl-L-alanine + D-glutamate + ATP = UDP-N-acetyl-alpha-D-muramoyl-L-alanyl-D-glutamate + ADP + phosphate + H(+). It participates in cell wall biogenesis; peptidoglycan biosynthesis. Its function is as follows. Cell wall formation. Catalyzes the addition of glutamate to the nucleotide precursor UDP-N-acetylmuramoyl-L-alanine (UMA). The sequence is that of UDP-N-acetylmuramoylalanine--D-glutamate ligase from Synechococcus sp. (strain JA-3-3Ab) (Cyanobacteria bacterium Yellowstone A-Prime).